Here is a 144-residue protein sequence, read N- to C-terminus: Large ribosomal subunit protein uL15 (144 aa).

Residues 1–53 are disordered; the sequence is MRLNTLSPAQGAKQAPKRVGRGIGSGLGKTGGRGHKGQNSRTGGGVRRGFEGG. Positions 21-31 are enriched in gly residues; sequence RGIGSGLGKTG.

It belongs to the universal ribosomal protein uL15 family. As to quaternary structure, part of the 50S ribosomal subunit.

Its function is as follows. Binds to the 23S rRNA. This Hamiltonella defensa subsp. Acyrthosiphon pisum (strain 5AT) protein is Large ribosomal subunit protein uL15.